The following is a 67-amino-acid chain: Conotoxin mr3d (67 aa).

A signal peptide spans 1–19 (MSKLGILLTICLLLFPLTA). Positions 20 to 52 (VPLDGDQPADRPAERMQDDISSEHHPFFDPVKR) are excised as a propeptide. 3 disulfides stabilise this stretch: Cys53–Cys65, Cys54–Cys62, and Cys58–Cys66. 4-hydroxyproline; partial is present on Pro64. Cys66 carries the cysteine amide; partial modification.

Belongs to the conotoxin M superfamily. In terms of processing, has been found to be hydroxylated and amidated by Han et al. (2006), and to be unmodified by Ju et al. (2022). As to expression, expressed by the venom duct.

It is found in the secreted. This chain is Conotoxin mr3d, found in Conus marmoreus (Marble cone).